Reading from the N-terminus, the 914-residue chain is Sensor protein TorS (914 aa).

Topologically, residues 1 to 8 (MNLTLTRR) are cytoplasmic. A helical transmembrane segment spans residues 9 to 29 (LWMGFALMALLTLTSTLVGWY). Topologically, residues 30 to 332 (NLRFISQVEK…EKASARGQYS (303 aa)) are periplasmic. The chain crosses the membrane as a helical span at residues 333-353 (LLLLGMVSLCALILILWRVVY). The HAMP domain maps to 354–407 (RSVTRPLAEQTQALQRLLDGDIDSPFPETAGVRELDTIGRLMDAFRSNVHALNR). At 354 to 914 (RSVTRPLAEQ…WLHKKDLNAI (561 aa)) the chain is on the cytoplasmic side. A Histidine kinase domain is found at 450–664 (AMSHEIRTPL…CFCLRLPLRV (215 aa)). Histidine 453 carries the post-translational modification Phosphohistidine; by autocatalysis. A Response regulatory domain is found at 683–798 (RLLLIEDNPL…VLGQLLAHYL (116 aa)). Aspartate 733 bears the 4-aspartylphosphate mark. The region spanning 821–914 (GTEKIHEWLV…WLHKKDLNAI (94 aa)) is the HPt domain. Residue histidine 860 is modified to Phosphohistidine.

As to quaternary structure, may form homomultimers. Seems to interact with TorT and TorC apocytochrome. In terms of processing, activation requires a sequential transfer of a phosphate group from a His in the primary transmitter domain, to an Asp in the receiver domain and to a His in the secondary transmitter domain.

The protein localises to the cell inner membrane. The catalysed reaction is ATP + protein L-histidine = ADP + protein N-phospho-L-histidine.. Its activity is regulated as follows. Inhibited by TorC apocytochrome. Its function is as follows. Member of the two-component regulatory system TorS/TorR involved in the anaerobic utilization of trimethylamine-N-oxide (TMAO). Detects the presence of TMAO in the medium and, in response, activates TorR via a four-step phosphorelay. When TMAO is removed, TorS can dephosphorylate TorR, probably by a reverse phosphorelay involving His-860 and Asp-733. In Escherichia coli (strain K12), this protein is Sensor protein TorS (torS).